Consider the following 563-residue polypeptide: Coiled-coil domain-containing protein 38 (563 aa).

Coiled coils occupy residues 129–212 (KRNT…KTEF), 384–415 (NIEF…RSRL), and 485–522 (ERMK…AVAQ). Residues 521–550 (AQPKKKLGRRLVYHSKPPSANKQQLPLVNE) are disordered. Residues 523–533 (PKKKLGRRLVY) show a composition bias toward basic residues.

In terms of assembly, interacts with CCDC42, CFAP53, IFT88 and ODF2. Interacts with CCDC146. Interacts with TEKT3. Interacts with ubiquitinated histone H2A.

It is found in the cytoplasm. The protein resides in the cytoskeleton. It localises to the microtubule organizing center. Its subcellular location is the centrosome. The protein localises to the perinuclear region. It is found in the cell projection. The protein resides in the cilium. It localises to the flagellum. In terms of biological role, essential for male fertility. Required for sperm flagellum biogenesis. Also required for acrosome biogenesis. Required for the attachment of developing acrosomes to the nucleus during spermiogenesis and may be involved in the transport of fibrous sheath components. The protein is Coiled-coil domain-containing protein 38 (CCDC38) of Macaca fascicularis (Crab-eating macaque).